A 294-amino-acid chain; its full sequence is Protein RarD (294 aa).

Residues 1 to 11 lie on the Cytoplasmic side of the membrane; that stretch reads MDAKQTRQGVL. The chain crosses the membrane as a helical span at residues 12–34; that stretch reads LALAAYFIWGIAPAYFKLIYYVP. The 128-residue stretch at 18 to 145 folds into the EamA domain; sequence FIWGIAPAYF…AVCGVLVQLW (128 aa). The Periplasmic segment spans residues 35–37; sequence ADE. The helical transmembrane segment at 38-60 threads the bilayer; it reads ILTHRVIWSFFFMVALLSVSRQW. At 61 to 72 the chain is on the cytoplasmic side; it reads RQVKRLLKTPKK. Residues 73–95 traverse the membrane as a helical segment; the sequence is IFLLALSAVLVGGNWLLFIWAVN. Residues 96–99 lie on the Periplasmic side of the membrane; sequence NHHM. Residues 100 to 122 form a helical membrane-spanning segment; that stretch reads LEASLGYFINPLVNILLGMIFLG. Residues 123–128 are Cytoplasmic-facing; it reads ERFRRM. Residues 129 to 146 traverse the membrane as a helical segment; that stretch reads QWLAVILAVCGVLVQLWT. The Periplasmic portion of the chain corresponds to 147 to 149; it reads FGS. A helical transmembrane segment spans residues 150–167; the sequence is LPIIALGLAFSFAFYGLV. At 168–179 the chain is on the cytoplasmic side; it reads RKKIAVEAQTGM. A helical transmembrane segment spans residues 180-197; that stretch reads LVETLWLLPVAAIYLFGI. Residues 198-211 are Periplasmic-facing; it reads ADSPTSHMGQNALS. The chain crosses the membrane as a helical span at residues 212 to 234; it reads LNLLLMAAGVVTTIPLLCFTGAA. The Cytoplasmic portion of the chain corresponds to 235–238; it reads TRLR. A helical membrane pass occupies residues 239-261; the sequence is LSTLGFFQYIGPTLMFLLAVTFY. At 262 to 270 the chain is on the periplasmic side; sequence GEVPGADKM. Residues 271–290 form a helical membrane-spanning segment; it reads VTFAFIWVALAIFVMDAIYT. Residues 291–294 lie on the Cytoplasmic side of the membrane; the sequence is QRKK.

Belongs to the EamA transporter family.

It is found in the cell inner membrane. The polypeptide is Protein RarD (rarD) (Salmonella typhimurium (strain LT2 / SGSC1412 / ATCC 700720)).